The chain runs to 200 residues: Recombination protein RecR (200 aa).

The C4-type zinc-finger motif lies at 57–72 (CEHCRTFTEEDICSIC). The region spanning 81–176 (RLLCVVEMPA…KVSRIAHGIP (96 aa)) is the Toprim domain.

This sequence belongs to the RecR family.

May play a role in DNA repair. It seems to be involved in an RecBC-independent recombinational process of DNA repair. It may act with RecF and RecO. This Mannheimia succiniciproducens (strain KCTC 0769BP / MBEL55E) protein is Recombination protein RecR.